The following is a 230-amino-acid chain: uncharacterized protein (230 aa).

Residues 1-57 are disordered; that stretch reads MPGPHSPNPGVGTNGPAPYPEPSSHEPQALDYPHDLGAAEPAFAPGPADDAALPPAA. Residues 38 to 55 are compositionally biased toward low complexity; sequence AAEPAFAPGPADDAALPP. The chain crosses the membrane as a helical span at residues 75–95; the sequence is LLIGIVVALALVSAMTAAIIY.

Its subcellular location is the membrane. This is an uncharacterized protein from Mycobacterium tuberculosis (strain CDC 1551 / Oshkosh).